Consider the following 387-residue polypeptide: 3-ketoacyl-CoA thiolase (387 aa).

The Acyl-thioester intermediate role is filled by C91. Residues H343 and C373 each act as proton acceptor in the active site.

This sequence belongs to the thiolase-like superfamily. Thiolase family. As to quaternary structure, heterotetramer of two alpha chains (FadB) and two beta chains (FadA).

Its subcellular location is the cytoplasm. The catalysed reaction is an acyl-CoA + acetyl-CoA = a 3-oxoacyl-CoA + CoA. The protein operates within lipid metabolism; fatty acid beta-oxidation. In terms of biological role, catalyzes the final step of fatty acid oxidation in which acetyl-CoA is released and the CoA ester of a fatty acid two carbons shorter is formed. The sequence is that of 3-ketoacyl-CoA thiolase from Vibrio vulnificus (strain CMCP6).